An 836-amino-acid polypeptide reads, in one-letter code: uncharacterized protein (836 aa).

3 disordered regions span residues 1-25 (MDST…NEEE), 692-718 (DSRS…NNQR), and 789-836 (ESSG…GYAS). Composition is skewed to polar residues over residues 789-799 (ESSGINVSNTR) and 825-836 (IDSSSAQNGYAS).

The protein localises to the nucleus. This is an uncharacterized protein from Schizosaccharomyces pombe (strain 972 / ATCC 24843) (Fission yeast).